Reading from the N-terminus, the 653-residue chain is DNA-directed RNA polymerase III subunit RPC-3 (653 aa).

Disordered regions lie at residues 141–186, 280–309, and 422–442; these read INGV…DSDP, DSSAPRKRLKLDGPLEDDVKDEDDGDDFSD, and IKEDEDDEDEEGGPVSMKRRG. Residues 159-170 show a composition bias toward basic and acidic residues; that stretch reads AENHTDHAHDYQ. Composition is skewed to acidic residues over residues 293 to 309 and 424 to 433; these read PLEDDVKDEDDGDDFSD and EDEDDEDEEG. A leucine-zipper region spans residues 580–601; sequence TYKSMSRCLQRIRVEREKLKFL.

This sequence belongs to the RNA polymerase beta chain family. As to quaternary structure, component of the RNA polymerase III (Pol III) complex consisting of 17 subunits.

It is found in the nucleus. Functionally, DNA-dependent RNA polymerase catalyzes the transcription of DNA into RNA using the four ribonucleoside triphosphates as substrates. Specific core component of RNA polymerase III which synthesizes small RNAs, such as 5S rRNA and tRNAs. The sequence is that of DNA-directed RNA polymerase III subunit RPC-3 (RPC-82) from Coccidioides immitis (strain RS) (Valley fever fungus).